The following is a 473-amino-acid chain: H(+)/Cl(-) exchange transporter ClcA (473 aa).

Residues 1–32 (MKTDTSTFLAQQIVRLRRRDQIRRLMQRDKTP) are Cytoplasmic-facing. Residues 33 to 69 (LAILFMAAVVGTLTGLVGVAFEKTVSWVQNMRIGALV) form a helical membrane-spanning segment. Topologically, residues 70 to 76 (QVADHAF) are periplasmic. A helical transmembrane segment spans residues 77–100 (LLWPLAFILSALLAMVGYFLVRKF). Residues 106–110 (GSGIP) carry the Selectivity filter part_1 motif. Residue Ser107 participates in chloride binding. The helical intramembrane region spans 109–116 (IPEIEGAL). The Cytoplasmic portion of the chain corresponds to 117–123 (EELRPVR). Transmembrane regions (helical) follow at residues 124–141 (WWRV…TLGA) and 148–166 (EGPT…LDVF). The Selectivity filter part_2 motif lies at 146–150 (GREGP). Residues 167–176 (RMRSAEARHT) lie on the Cytoplasmic side of the membrane. Intramembrane regions (helical) lie at residues 177–189 (LLAT…LSAA) and 193–201 (PLAGILFII). Over 202 to 214 (EEMRPQFRYNLIS) the chain is Cytoplasmic. The helical transmembrane segment at 215–232 (IKAVFTGVIMSSIVFRIF) threads the bilayer. Residues 233–252 (NGEAPIIEVGKLSDAPVNTL) lie on the Periplasmic side of the membrane. A helical membrane pass occupies residues 253-281 (WLYLILGIIFGCVGPVFNSLVLRTQDMFQ). Residues 282–287 (RFHGGE) are Cytoplasmic-facing. The helical transmembrane segment at 288–309 (IKKWVLMGGAIGGLCGILGLIE) threads the bilayer. The Periplasmic segment spans residues 310–329 (PAAAGGGFNLIPIAAAGNFS). The next 2 membrane-spanning stretches (helical) occupy residues 330–349 (VGLL…LCFS) and 355–376 (GIFA…MAAA). Residues 355-359 (GIFAP) carry the Selectivity filter part_3 motif. Chloride-binding residues include Ile356 and Phe357. Topologically, residues 377-386 (VLFPQYHPEA) are periplasmic. An intramembrane region (helical) is located at residues 387–401 (GTFAIAGMGALMAAS). Positions 402 to 404 (VRA) form an intramembrane region, note=Loop between two helices. The helical intramembrane region spans 405 to 416 (PLTGIVLVLEMT). Residues 417–421 (DNYQL) constitute an intramembrane region (note=Loop between two helices). A helical membrane pass occupies residues 422-438 (ILPMIITCLGATLLAQF). The Cytoplasmic portion of the chain corresponds to 439–473 (LGGKPLYSTILARTLAKQDAEQAAKNQNAPAGENT). Position 445 (Tyr445) interacts with chloride.

It belongs to the chloride channel (TC 2.A.49) family. ClcA subfamily. As to quaternary structure, homodimer.

It localises to the cell inner membrane. The enzyme catalyses 2 chloride(in) + H(+)(out) = 2 chloride(out) + H(+)(in). Functionally, proton-coupled chloride transporter. Functions as antiport system and exchanges two chloride ions for 1 proton. Probably acts as an electrical shunt for an outwardly-directed proton pump that is linked to amino acid decarboxylation, as part of the extreme acid resistance (XAR) response. In Salmonella paratyphi A (strain AKU_12601), this protein is H(+)/Cl(-) exchange transporter ClcA.